A 420-amino-acid chain; its full sequence is MKYRRIKGTNDIFGEEIWYWRYVEETFRNVCESAGIEEIRTPIFEQTELFVRSVGEESDIVQKEMYTFQDKAGRSITLRPEGTAPVVRAFLENSLIDRGFQQRYYYIGPMFRYEKPQSGRLRQFHQVGFEIIGPESPKADFEVIMLVDTFLRRLGLTKYKIHLNSIGCPVCRKNYREALKEYYGQVLDNLCDDCKRRYETNILRLLDCKVDHEYSLNAPKSVDYLCDSCRAHYKKLKEYLNTFEIEYVEDHTLVRGLDYYTRTVFEVRHEGLGAQSAIAGGGRYDGLFAELGGSSVPALGFAGGIERIILALKAEGIEIPMKNVHLVYIATLGEKAFMDGVRLAGELRKKGLSVDVDIMDRKLSGQLKHASRMGSRYAVIIGDEELEKGIVILRDLETGDQVEIDRDFAADYIAERVSKD.

It belongs to the class-II aminoacyl-tRNA synthetase family. As to quaternary structure, homodimer.

Its subcellular location is the cytoplasm. It carries out the reaction tRNA(His) + L-histidine + ATP = L-histidyl-tRNA(His) + AMP + diphosphate + H(+). The polypeptide is Histidine--tRNA ligase (Thermotoga sp. (strain RQ2)).